The following is a 379-amino-acid chain: 1-deoxy-D-xylulose 5-phosphate reductoisomerase (379 aa).

NADPH contacts are provided by T10, G11, S12, I13, R38, N39, and N121. Residue K122 coordinates 1-deoxy-D-xylulose 5-phosphate. An NADPH-binding site is contributed by E123. Mn(2+) is bound at residue D147. Residues S148, E149, S173, and H196 each coordinate 1-deoxy-D-xylulose 5-phosphate. Residue E149 participates in Mn(2+) binding. Residue G202 participates in NADPH binding. 4 residues coordinate 1-deoxy-D-xylulose 5-phosphate: S209, N214, K215, and E218. E218 contributes to the Mn(2+) binding site.

It belongs to the DXR family. Mg(2+) serves as cofactor. Mn(2+) is required as a cofactor.

It carries out the reaction 2-C-methyl-D-erythritol 4-phosphate + NADP(+) = 1-deoxy-D-xylulose 5-phosphate + NADPH + H(+). Its pathway is isoprenoid biosynthesis; isopentenyl diphosphate biosynthesis via DXP pathway; isopentenyl diphosphate from 1-deoxy-D-xylulose 5-phosphate: step 1/6. Its function is as follows. Catalyzes the NADPH-dependent rearrangement and reduction of 1-deoxy-D-xylulose-5-phosphate (DXP) to 2-C-methyl-D-erythritol 4-phosphate (MEP). The protein is 1-deoxy-D-xylulose 5-phosphate reductoisomerase of Chlamydia muridarum (strain MoPn / Nigg).